The chain runs to 244 residues: Serine acetyltransferase (244 aa).

The protein belongs to the transferase hexapeptide repeat family.

Its subcellular location is the cytoplasm. It carries out the reaction L-serine + acetyl-CoA = O-acetyl-L-serine + CoA. The protein operates within amino-acid biosynthesis; L-cysteine biosynthesis; L-cysteine from L-serine: step 1/2. This Synechococcus elongatus (strain ATCC 33912 / PCC 7942 / FACHB-805) (Anacystis nidulans R2) protein is Serine acetyltransferase (cysE).